The sequence spans 366 residues: NADH-quinone oxidoreductase subunit D (366 aa).

This sequence belongs to the complex I 49 kDa subunit family. NDH-1 is composed of 14 different subunits. Subunits NuoB, C, D, E, F, and G constitute the peripheral sector of the complex.

It localises to the cell membrane. The enzyme catalyses a quinone + NADH + 5 H(+)(in) = a quinol + NAD(+) + 4 H(+)(out). Functionally, NDH-1 shuttles electrons from NADH, via FMN and iron-sulfur (Fe-S) centers, to quinones in the respiratory chain. The immediate electron acceptor for the enzyme in this species is believed to be a menaquinone. Couples the redox reaction to proton translocation (for every two electrons transferred, four hydrogen ions are translocated across the cytoplasmic membrane), and thus conserves the redox energy in a proton gradient. The polypeptide is NADH-quinone oxidoreductase subunit D (Bacillus cereus (strain ZK / E33L)).